Here is a 200-residue protein sequence, read N- to C-terminus: Small ribosomal subunit protein uS4 (200 aa).

The tract at residues 22–42 is disordered; sequence TGKELEKRPYAPGPHGPNQRK. Residues 92 to 152 enclose the S4 RNA-binding domain; sequence ARLDNLVYRM…EKSNNLVVVK (61 aa).

Belongs to the universal ribosomal protein uS4 family. Part of the 30S ribosomal subunit. Contacts protein S5. The interaction surface between S4 and S5 is involved in control of translational fidelity.

In terms of biological role, one of the primary rRNA binding proteins, it binds directly to 16S rRNA where it nucleates assembly of the body of the 30S subunit. With S5 and S12 plays an important role in translational accuracy. The protein is Small ribosomal subunit protein uS4 of Bacillus cereus (strain Q1).